Reading from the N-terminus, the 242-residue chain is Probable transcriptional regulatory protein Bphyt_1301 (242 aa).

It belongs to the TACO1 family.

The protein localises to the cytoplasm. The sequence is that of Probable transcriptional regulatory protein Bphyt_1301 from Paraburkholderia phytofirmans (strain DSM 17436 / LMG 22146 / PsJN) (Burkholderia phytofirmans).